The sequence spans 1103 residues: Platelet-derived growth factor receptor beta (1103 aa).

Positions 1 to 31 (MQVPGTMPAPVLKGQALWLPLLLMLSPQASG) are cleaved as a signal peptide. 5 consecutive Ig-like C2-type domains span residues 33–120 (LVIT…YIFV), 129–210 (PVDP…YSLQ), 214–309 (INVS…INVT), 331–403 (HRSR…HEDA), and 416–524 (PVRV…VTVV). Residues 33 to 532 (LVITPPGPEL…VVPHSLPFKV (500 aa)) are Extracellular-facing. Residues Asn45 and Asn89 are each glycosylated (N-linked (GlcNAc...) asparagine). Intrachain disulfides connect Cys54–Cys100 and Cys149–Cys190. Residues Asn215 and Asn230 are each glycosylated (N-linked (GlcNAc...) asparagine). The cysteines at positions 235 and 291 are disulfide-linked. 6 N-linked (GlcNAc...) asparagine glycosylation sites follow: Asn292, Asn307, Asn354, Asn371, Asn468, and Asn479. Cysteines 436 and 508 form a disulfide. A helical membrane pass occupies residues 533–553 (VVISAILALVVLTIISLIILI). At 554–1103 (MLWQKKPRYE…PRAEAEDSFL (550 aa)) the chain is on the cytoplasmic side. Tyr562, Tyr579, and Tyr581 each carry phosphotyrosine; by autocatalysis. One can recognise a Protein kinase domain in the interval 600–962 (LVLGRTLGSG…QLVLLLERLL (363 aa)). Residues 606–614 (LGSGAFGQV) and Lys634 each bind ATP. Tyr686 is subject to Phosphotyrosine; by ABL1 and ABL2. Residues Tyr716, Tyr740, Tyr751, Tyr763, Tyr771, Tyr775, and Tyr778 each carry the phosphotyrosine; by autocatalysis modification. Asp826 serves as the catalytic Proton acceptor. A Phosphotyrosine; by autocatalysis modification is found at Tyr857. Residues Tyr934 and Tyr970 each carry the phosphotyrosine; by ABL1 and ABL2 modification. A phosphotyrosine; by autocatalysis mark is found at Tyr1009 and Tyr1021. The segment at 1017-1103 (GDNDYIIPLP…PRAEAEDSFL (87 aa)) is disordered. A compositionally biased stretch (polar residues) spans 1039–1059 (SSPSLASSTLNEVNTSSTISC). A compositionally biased stretch (acidic residues) spans 1065-1075 (PQEEPEPEPEP). The segment covering 1076-1086 (QPEPQVVPEPP) has biased composition (pro residues).

It belongs to the protein kinase superfamily. Tyr protein kinase family. CSF-1/PDGF receptor subfamily. Interacts with homodimeric PDGFB and PDGFD, and with heterodimers formed by PDGFA and PDGFB. May also interact with homodimeric PDGFC. Monomer in the absence of bound ligand. Interaction with homodimeric PDGFB, heterodimers formed by PDGFA and PDGFB or homodimeric PDGFD, leads to receptor dimerization, where both PDGFRA homodimers and heterodimers with PDGFRB are observed. Interacts with SH2B2/APS. Interacts directly (tyrosine phosphorylated) with SHB. Interacts (tyrosine phosphorylated) with PIK3R1 and RASA1. Interacts (tyrosine phosphorylated) with CBL. Interacts (tyrosine phosphorylated) with SRC and SRC family kinases. Interacts (tyrosine phosphorylated) with PIK3C2B, maybe indirectly. Interacts (tyrosine phosphorylated) with SHC1, GRB7, GRB10 and NCK1. Interaction with GRB2 is mediated by SHC1. Interacts (via C-terminus) with NHERF1. N-glycosylated. In terms of processing, ubiquitinated. After autophosphorylation, the receptor is polyubiquitinated, leading to its degradation. Post-translationally, autophosphorylated on tyrosine residues upon ligand binding. Autophosphorylation occurs in trans, i.e. one subunit of the dimeric receptor phosphorylates tyrosine residues on the other subunit. Phosphorylation at Tyr-579, and to a lesser degree, Tyr-581 is important for interaction with SRC. Phosphorylation at Tyr-716 is important for interaction with GRB2. Phosphorylation at Tyr-740 and Tyr-751 is important for interaction with PIK3R1. Phosphorylation at Tyr-751 is important for interaction with NCK1. Phosphorylation at Tyr-771 and Tyr-857 is important for interaction with RASA1/GAP. Phosphorylation at Tyr-857 is important for efficient phosphorylation of PLCG1 and PTPN11, resulting in increased phosphorylation of AKT1, MAPK1/ERK2 and/or MAPK3/ERK1, PDCD6IP/ALIX and STAM, and in increased cell proliferation. Phosphorylation at Tyr-1009 is important for interaction with PTPN11. Phosphorylation at Tyr-1009 and Tyr-1021 is important for interaction with PLCG1. Dephosphorylated by PTPRJ at Tyr-751, Tyr-857, Tyr-1009 and Tyr-1021. Dephosphorylated by PTPN2 at Tyr-579 and Tyr-1021.

The protein localises to the cell membrane. The protein resides in the cytoplasmic vesicle. It localises to the lysosome lumen. It carries out the reaction L-tyrosyl-[protein] + ATP = O-phospho-L-tyrosyl-[protein] + ADP + H(+). Its activity is regulated as follows. Present in an inactive conformation in the absence of bound ligand. Binding of PDGFB and/or PDGFD leads to dimerization and activation by autophosphorylation on tyrosine residues. In terms of biological role, tyrosine-protein kinase that acts as a cell-surface receptor for homodimeric PDGFB and PDGFD and for heterodimers formed by PDGFA and PDGFB, and plays an essential role in the regulation of embryonic development, cell proliferation, survival, differentiation, chemotaxis and migration. Plays an essential role in blood vessel development by promoting proliferation, migration and recruitment of pericytes and smooth muscle cells to endothelial cells. Plays a role in the migration of vascular smooth muscle cells and the formation of neointima at vascular injury sites. Required for normal development of the cardiovascular system. Required for normal recruitment of pericytes (mesangial cells) in the kidney glomerulus, and for normal formation of a branched network of capillaries in kidney glomeruli. Promotes rearrangement of the actin cytoskeleton and the formation of membrane ruffles. Binding of its cognate ligands - homodimeric PDGFB, heterodimers formed by PDGFA and PDGFB or homodimeric PDGFD -leads to the activation of several signaling cascades; the response depends on the nature of the bound ligand and is modulated by the formation of heterodimers between PDGFRA and PDGFRB. Phosphorylates PLCG1, PIK3R1, PTPN11, RASA1/GAP, CBL, SHC1 and NCK1. Activation of PLCG1 leads to the production of the cellular signaling molecules diacylglycerol and inositol 1,4,5-trisphosphate, mobilization of cytosolic Ca(2+) and the activation of protein kinase C. Phosphorylation of PIK3R1, the regulatory subunit of phosphatidylinositol 3-kinase, leads to the activation of the AKT1 signaling pathway. Phosphorylation of SHC1, or of the C-terminus of PTPN11, creates a binding site for GRB2, resulting in the activation of HRAS, RAF1 and down-stream MAP kinases, including MAPK1/ERK2 and/or MAPK3/ERK1. Promotes phosphorylation and activation of SRC family kinases. Promotes phosphorylation of PDCD6IP/ALIX and STAM. Receptor signaling is down-regulated by protein phosphatases that dephosphorylate the receptor and its down-stream effectors, and by rapid internalization of the activated receptor. The protein is Platelet-derived growth factor receptor beta (PDGFRB) of Canis lupus familiaris (Dog).